The following is a 273-amino-acid chain: MTLQETIIAQLGVKPSINPKEEIRKSVDFLKAYMIKHPFLKTYVLGISGGQDSTLAGRLAQLAVEELRAETEKDYQFIAIRLPYGVQADEDDAQRALAFIKPDVSLTINIKEAVDGQVAELAKAGVNVSDFNKGNIKARQRMITQYAVAGENSGAVIGTDHAAENLTGFFTKFGDGGADILPLFRLNKRQGAALLAELGADKALYEKVPTADLEEDKPGIADEVALGVTYHEIDDYLEGKEVSAKAQETIETWWRKGQHKRHLPITIFDDFWK.

46–53 (GISGGQDS) lines the ATP pocket. Aspartate 52 is a binding site for Mg(2+). Deamido-NAD(+) is bound at residue arginine 139. Residue threonine 159 participates in ATP binding. Glutamate 164 serves as a coordination point for Mg(2+). Deamido-NAD(+) contacts are provided by lysine 172 and aspartate 179. Residues lysine 188 and threonine 210 each contribute to the ATP site. 259–260 (HK) contributes to the deamido-NAD(+) binding site.

The protein belongs to the NAD synthetase family. Homodimer.

It catalyses the reaction deamido-NAD(+) + NH4(+) + ATP = AMP + diphosphate + NAD(+) + H(+). It functions in the pathway cofactor biosynthesis; NAD(+) biosynthesis; NAD(+) from deamido-NAD(+) (ammonia route): step 1/1. Functionally, catalyzes the ATP-dependent amidation of deamido-NAD to form NAD. Uses ammonia as a nitrogen source. The polypeptide is NH(3)-dependent NAD(+) synthetase (Streptococcus thermophilus (strain ATCC BAA-250 / LMG 18311)).